The primary structure comprises 232 residues: Protein shisa-3 (232 aa).

An N-terminal signal peptide occupies residues 1-19 (MRLLGCFFLIFLTWGSARA). Residues 20 to 93 (QGEYCHGWLD…GVSAQPVYVP (74 aa)) are Lumenal-facing. A helical membrane pass occupies residues 94–114 (FLIVGSIFIAFIIVGSLVAVY). The Cytoplasmic portion of the chain corresponds to 115-232 (CCTCLRPKQT…NKSCPDFRQS (118 aa)). The tract at residues 146–185 (TSGNLRTPSRQSSTATSSTSTGGSVRRLSSSRADPGYLVS) is disordered. Over residues 151–177 (RTPSRQSSTATSSTSTGGSVRRLSSSR) the composition is skewed to low complexity.

Belongs to the shisa family. As to quaternary structure, interacts with fzd8 and fgfr1.

The protein localises to the endoplasmic reticulum membrane. In terms of biological role, plays an essential role in the maturation of presomitic mesoderm cells by individual attenuation of both fgf and wnt signaling. Regulates head and somite developmen. Inhibits both wnt and fgf signaling through the regulation of protein maturation and cell surface transportation of their receptors within the endoplasmic reticulum. The sequence is that of Protein shisa-3 (shisa3) from Xenopus laevis (African clawed frog).